A 259-amino-acid polypeptide reads, in one-letter code: Isoepoxydon dehydrogenase patN (259 aa).

The NADP(+) site is built by Asp69, Asn96, and Lys125. Active-site proton donor residues include Ser143 and Ser144. 3 residues coordinate NADP(+): Tyr158, Lys162, and Val191. Tyr158 acts as the Proton acceptor in catalysis. Lys162 functions as the Lowers pKa of active site Tyr in the catalytic mechanism.

The protein belongs to the short-chain dehydrogenases/reductases (SDR) family.

It is found in the cytoplasm. Its subcellular location is the cytosol. It carries out the reaction isoepoxydon + NADP(+) = phyllostine + NADPH + H(+). The protein operates within mycotoxin biosynthesis; patulin biosynthesis. In terms of biological role, isoepoxydon dehydrogenase; part of the gene cluster that mediates the biosynthesis of patulin, an acetate-derived tetraketide mycotoxin produced by several fungal species that shows antimicrobial properties against several bacteria. PatN catalyzes the conversion of isoepoxydon into phyllostine. The pathway begins with the synthesis of 6-methylsalicylic acid by the polyketide synthase (PKS) patK via condensation of acetate and malonate units. The 6-methylsalicylic acid decarboxylase patG then catalyzes the decarboxylation of 6-methylsalicylic acid to yield m-cresol (also known as 3-methylphenol). These first reactions occur in the cytosol. The intermediate m-cresol is then transported into the endoplasmic reticulum where the cytochrome P450 monooxygenase patH converts it to m-hydroxybenzyl alcohol, which is further converted to gentisyl alcohol by the cytochrome P450 monooxygenase patI. The oxidoreductases patJ and patO further convert gentisyl alcohol to isoepoxydon in the vacuole. PatN catalyzes then the transformation of isoepoxydon into phyllostine. The cluster protein patF is responsible for the conversion from phyllostine to neopatulin whereas the alcohol dehydrogenase patD converts neopatulin to E-ascladiol. The steps between isoepoxydon and E-ascladiol occur in the cytosol, and E-ascladiol is probably secreted to the extracellular space by one of the cluster-specific transporters patC or patM. Finally, the secreted patulin synthase patE catalyzes the conversion of E-ascladiol to patulin. This is Isoepoxydon dehydrogenase patN from Penicillium expansum (Blue mold rot fungus).